A 735-amino-acid chain; its full sequence is Muskelin (735 aa).

An N-acetylalanine modification is found at A2. Residues 172 to 204 (REQEAIRLCLKHFRQHNYTEAFESLQKKTKIAL) form the LisH domain. Residues 206–258 (HPMLTDIHDKLVLKGDFDACEELIEKAVNDGLFNQYISQQEYKPRWSQIIPKS) form the CTLH domain. 6 Kelch repeats span residues 284–330 (TVYL…SCHK), 339–391 (QIYT…FDHQ), 408–458 (ILTC…SRIG), 469–515 (CLYV…TGFT), 526–578 (EIHV…SLQE), and 597–651 (VHYL…AQMD).

In terms of assembly, homodimer; may form higher oligomers. Identified in the CTLH complex that contains GID4, RANBP9 and/or RANBP10, MKLN1, MAEA, RMND5A (or alternatively its paralog RMND5B), GID8, ARMC8, WDR26 and YPEL5. Within this complex, MAEA, RMND5A (or alternatively its paralog RMND5B), GID8, WDR26, and RANBP9 and/or RANBP10 form the catalytic core, while GID4, MKLN1, ARMC8 and YPEL5 have ancillary roles. Interacts with RANBP9. Part of a complex consisting of RANBP9, MKLN1 and GID8. Interacts with GABRA1. Interacts with the C-terminal tail of PTGER3.

It is found in the cytoplasm. Its subcellular location is the cytosol. The protein resides in the nucleus. The protein localises to the nucleoplasm. It localises to the cell projection. It is found in the ruffle. Its subcellular location is the cell cortex. The protein resides in the synapse. The protein localises to the postsynapse. Component of the CTLH E3 ubiquitin-protein ligase complex that selectively accepts ubiquitin from UBE2H and mediates ubiquitination and subsequent proteasomal degradation of the transcription factor HBP1. Required for internalization of the GABA receptor GABRA1 from the cell membrane via endosomes and subsequent GABRA1 degradation. Acts as a mediator of cell spreading and cytoskeletal responses to the extracellular matrix component THBS1. The sequence is that of Muskelin (MKLN1) from Pongo abelii (Sumatran orangutan).